The primary structure comprises 1117 residues: Telomerase reverse transcriptase (1117 aa).

Residues 1–191 (MQKINNINNN…VKQKKWYKNN (191 aa)) are TEN. The RBD stretch occupies residues 217–519 (NQYIYPEIQR…ENLEKVEEKL (303 aa)). A Reverse transcriptase domain is found at 517 to 881 (EKLIPEDSFQ…NECQWIGKSI (365 aa)). Residues 520–887 (IPEDSFQKYP…GKSIDMNTLE (368 aa)) form an RT region. Mg(2+) is bound at residue D618. Residues 638–742 (SDLIQDTYFI…NQDKPRCITK (105 aa)) are TRAP. Residues D815 and D816 each contribute to the Mg(2+) site. The segment at 888-1117 (IKSIQKQTQQ…SAKSNQQNTN (230 aa)) is CTE.

Belongs to the reverse transcriptase family. Telomerase subfamily. In terms of assembly, component of the telomerase holoenzyme complex, composed of the catalytic core (the catalytic subunit TERT, the telomerase RNA template component TER and TAP65/p65), which is associated with two heterotrimeric subcomplexes: (i) the replication protein A (RPA)-related subcomplex, composed of TEB1, RPA2/TEB2 and RPA3/TEB3 and (ii) the CST-like subcomplex, composed of TAP75/p75, TAP45/p45 and TAP19/p19. TEB1 and the CST-like subcomplex are tethered to the catalytic core by TAP50/p50.

It is found in the nucleus. The protein localises to the chromosome. It localises to the telomere. It catalyses the reaction DNA(n) + a 2'-deoxyribonucleoside 5'-triphosphate = DNA(n+1) + diphosphate. In terms of biological role, catalytic component of telomerase, an essential ribonucleoprotein enzyme that copies new telomeric repeats onto chromosome ends by repetitively synthesizing the short telomere-repeat sequence 5'-TTGGGG-3' using an RNA template component TER. TERT is a reverse transcriptase that adds simple sequence repeats to chromosome ends by copying a template sequence within the RNA component of the enzyme. The polypeptide is Telomerase reverse transcriptase (Tetrahymena thermophila (strain SB210)).